Reading from the N-terminus, the 969-residue chain is Manganese resistance protein MNR2 (969 aa).

Over residues 1–11 (MSTDNSQKDEG) the composition is skewed to basic and acidic residues. 4 disordered regions span residues 1–49 (MSTD…SRRP), 96–153 (GAFI…DLSP), 167–186 (HKSFVDENSPTDRRQSNANN), and 199–256 (VNNN…NNSS). The Cytoplasmic segment spans residues 1–912 (MSTDNSQKDE…DMNDVLGKIT (912 aa)). Low complexity predominate over residues 13–23 (PLLSPYSSSPQ). The segment covering 24-36 (LRKKKRNQKRRKD) has biased composition (basic residues). A compositionally biased stretch (basic and acidic residues) spans 37-48 (KFVGHLKSDSRR). Ser-114 is subject to Phosphoserine. The segment covering 141–152 (SDQNRSLVSDLS) has biased composition (polar residues). Ser-175 bears the Phosphoserine mark. At Thr-177 the chain carries Phosphothreonine. Phosphoserine is present on Ser-182. Composition is skewed to low complexity over residues 225–234 (NKNSKSTSSD) and 244–256 (SRPSSSLSSNNSS). At Ser-383 the chain carries Phosphoserine. Disordered regions lie at residues 559–662 (VRRR…KPRE) and 746–769 (QSDDSSDSDSSDSDSDSGASDEDA). Positions 565–578 (EKQESATLDHESIS) are enriched in basic and acidic residues. The residue at position 571 (Thr-571) is a Phosphothreonine. Phosphoserine is present on residues Ser-576 and Ser-582. Composition is skewed to low complexity over residues 590 to 607 (SNESNANNNNSTSNASRS) and 622 to 632 (ANRTTNTSSSS). Over residues 749 to 769 (DSSDSDSSDSDSDSGASDEDA) the composition is skewed to acidic residues. A helical membrane pass occupies residues 913 to 933 (ILGTIVLPMNVITGLWGMNVI). The Extracellular portion of the chain corresponds to 934–941 (VPGQYRDS). Residues 942 to 962 (LTWFIGIVLFMCMLACSAYMY) form a helical membrane-spanning segment. Residues 963–969 (TKRRFGF) lie on the Cytoplasmic side of the membrane.

Belongs to the CorA metal ion transporter (MIT) (TC 1.A.35) family.

It is found in the membrane. The chain is Manganese resistance protein MNR2 (MNR2) from Saccharomyces cerevisiae (strain ATCC 204508 / S288c) (Baker's yeast).